A 537-amino-acid chain; its full sequence is Caspase recruitment domain-containing protein 8 (537 aa).

Residues 1-23 (MEKKECPEKSSSSEEELPRRDSG) are compositionally biased toward basic and acidic residues. Disordered regions lie at residues 1 to 28 (MEKK…SRNI) and 113 to 133 (GDIP…SGDI). The interval 161 to 296 (FLGPEGNVDV…FYAVLESPSF (136 aa)) is ZU5. In terms of domain architecture, FIIND spans 161–446 (FLGPEGNVDV…LQLVAASAPP (286 aa)). Residues 297–446 (SLMGILLRIA…LQLVAASAPP (150 aa)) are UPA. The CARD domain occupies 446–536 (PPFSGAAFVK…YLVSYLRQQN (91 aa)).

As to quaternary structure, interacts with DPP9; leading to inhibit activation of the inflammasome. DPP9 acts via formation of a ternary complex, composed of a DPP9 homodimer, one full-length CARD8 protein, and one cleaved C-terminus of CARD8 (Caspase recruitment domain-containing protein 8, C-terminus). Interacts with DPP8; leading to inhibit activation of the inflammasome, probably via formation of a ternary complex with DPP8. Interacts with NLRP3. Interacts with IKBKG/NEMO. Interacts with DRAL. Binds to caspase-1 (CASP1), CARD16/pseudo-ICE and CARD18/ICEBERG. Interacts with NLRP2 (via NACHT domain). In terms of assembly, interacts with the C-terminal part of CARD8 (Caspase recruitment domain-containing protein 8, C-terminus) in absence of pathogens and other damage-associated signals. Interacts with the N-terminal part of CARD8 (Caspase recruitment domain-containing protein 8, N-terminus) in absence of pathogens and other damage-associated signals. Homomultimer; forms the CARD8 inflammasome polymeric complex, a filament composed of homopolymers of this form in response to pathogens and other damage-associated signals. The CARD8 inflammasome polymeric complex directly recruits pro-caspase-1 (proCASP1) independently of PYCARD/ASC. Interacts (via CARD domain) with CASP1 (via CARD domain); leading to CASP1 activation. Undergoes autocatalytic processing within the FIIND domain to generate the N-terminal and C-terminal parts, which are associated non-covalently in absence of pathogens and other damage-associated signals. Post-translationally, ubiquitinated by the N-end rule pathway in response to pathogens and other damage-associated signals, leading to its degradation by the proteasome and subsequent release of the cleaved C-terminal part of the protein (Caspase recruitment domain-containing protein 8, C-terminus), which polymerizes and forms the CARD8 inflammasome. In terms of processing, (Microbial infection) Proteolytic cleavage by HIV-1 protease in the disordered region and within the ZU5 region of the FIIND domain promotes ubiquitination of the N-terminal part by the N-end rule pathway and degradation by the proteasome, releasing the cleaved C-terminal part of the protein (Caspase recruitment domain-containing protein 8, C-terminus), which polymerizes and forms the CARD8 inflammasome. Undergoes less autocatalytic processing within the FIIND domain compared to isoform 5. In terms of tissue distribution, high expression in lung, ovary, testis and placenta. Lower expression in heart, kidney and liver. Also expressed in spleen, lymph node and bone marrow.

Its subcellular location is the cytoplasm. The protein localises to the nucleus. The protein resides in the inflammasome. Its activity is regulated as follows. CARD8 inflammasome is activated by HIV-1 protease activity: HIV-1 protease cleaves CARD8, promoting ubiquitination and degradation of the N-terminal part, releasing the cleaved C-terminal part of the protein (Caspase recruitment domain-containing protein 8, C-terminus), which polymerizes and forms the CARD8 inflammasome. CARD8 inflammasome is inhibited by DPP8 and DPP9, which sequester the C-terminal fragment of CARD8 (Caspase recruitment domain-containing protein 8, C-terminus) in a ternary complex, thereby preventing CARD8 oligomerization and activation. CARD8 inflammasome is activated by Val-boroPro (Talabostat, PT-100), an inhibitor of dipeptidyl peptidases DPP8 and DPP9. Val-boroPro relieves inhibition of DPP8 and/or DPP9 by inducing the proteasome-mediated destruction of the N-terminal part of CARD8, releasing its C-terminal part from autoinhibition. Indirectly activated by the pseudodipeptide CQ31. CQ31 directly inactivates the peptidases PEPD and XPNPEP1, leading to an accumulation of dipeptides that weaky inhibit DDP8 and DPP9, relieving DPP8- and/or DPP9-mediated inhibition of CARD8. In terms of biological role, inflammasome sensor, which mediates inflammasome activation in response to various pathogen-associated signals, leading to subsequent pyroptosis of CD4(+) T-cells and macrophages. Inflammasomes are supramolecular complexes that assemble in the cytosol in response to pathogens and other damage-associated signals and play critical roles in innate immunity and inflammation. Acts as a recognition receptor (PRR): recognizes specific pathogens and other damage-associated signals, such as HIV-1 protease activity or Val-boroPro inhibitor, and mediates CARD8 inflammasome activation. In response to pathogen-associated signals, the N-terminal part of CARD8 is degraded by the proteasome, releasing the cleaved C-terminal part of the protein (Caspase recruitment domain-containing protein 8, C-terminus), which polymerizes to initiate the formation of the inflammasome complex: the CARD8 inflammasome directly recruits pro-caspase-1 (proCASP1) independently of PYCARD/ASC and promotes caspase-1 (CASP1) activation, which subsequently cleaves and activates inflammatory cytokines IL1B and IL18 and gasdermin-D (GSDMD), leading to pyroptosis. Ability to sense HIV-1 protease activity leads to the clearance of latent HIV-1 in patient CD4(+) T-cells after viral reactivation; in contrast, HIV-1 can evade CARD8-sensing when its protease remains inactive in infected cells prior to viral budding. Also acts as a negative regulator of the NLRP3 inflammasome. May also act as an inhibitor of NF-kappa-B activation. Constitutes the precursor of the CARD8 inflammasome, which mediates autoproteolytic processing within the FIIND domain to generate the N-terminal and C-terminal parts, which are associated non-covalently in absence of pathogens and other damage-associated signals. Functionally, regulatory part that prevents formation of the CARD8 inflammasome: in absence of pathogens and other damage-associated signals, interacts with the C-terminal part of CARD8 (Caspase recruitment domain-containing protein 8, C-terminus), preventing activation of the CARD8 inflammasome. In response to pathogen-associated signals, this part is ubiquitinated by the N-end rule pathway and degraded by the proteasome, releasing the cleaved C-terminal part of the protein, which polymerizes and forms the CARD8 inflammasome. Its function is as follows. Constitutes the active part of the CARD8 inflammasome. In absence of pathogens and other damage-associated signals, interacts with the N-terminal part of CARD8 (Caspase recruitment domain-containing protein 8, N-terminus), preventing activation of the CARD8 inflammasome. In response to pathogen-associated signals, the N-terminal part of CARD8 is degraded by the proteasome, releasing this form, which polymerizes to form the CARD8 inflammasome complex: the CARD8 inflammasome complex then directly recruits pro-caspase-1 (proCASP1) and promotes caspase-1 (CASP1) activation, leading to gasdermin-D (GSDMD) cleavage and subsequent pyroptosis. This chain is Caspase recruitment domain-containing protein 8, found in Homo sapiens (Human).